The following is a 115-amino-acid chain: Pro-neuregulin-4, membrane-bound isoform (115 aa).

The Extracellular segment spans residues 1–62 (MPTDHEQPCG…SSIPSESNLS (62 aa)). Residues 5–46 (HEQPCGPRHRSFCLNGGICYVIPTIPSPFCRCIENYTGARCE) form the EGF-like domain. 3 disulfides stabilise this stretch: Cys9–Cys23, Cys17–Cys34, and Cys36–Cys45. Asn39 and Asn60 each carry an N-linked (GlcNAc...) asparagine glycan. The helical transmembrane segment at 63–83 (AAFVVLAVLLTLTIAALCFLC) threads the bilayer. The Cytoplasmic segment spans residues 84 to 115 (RKGHLQRASSVQCEISLVETNNTRTRHSHREH).

Belongs to the neuregulin family. In terms of assembly, interacts with ERBB4. Proteolytic cleavage close to the plasma membrane on the external face leads to the release of the soluble growth factor form. In terms of processing, extensive glycosylation precedes the proteolytic cleavage. As to expression, highly expressed in pancreas; weakly expressed in muscle.

It localises to the cell membrane. Its subcellular location is the secreted. Its function is as follows. Low affinity ligand for the ERBB4 tyrosine kinase receptor. Concomitantly recruits ERBB1 and ERBB2 coreceptors, resulting in ligand-stimulated tyrosine phosphorylation and activation of the ERBB receptors. Does not bind to the ERBB1, ERBB2 and ERBB3 receptors. This is Pro-neuregulin-4, membrane-bound isoform (Nrg4) from Mus musculus (Mouse).